The chain runs to 223 residues: Glycerol-3-phosphate acyltransferase (223 aa).

A run of 5 helical transmembrane segments spans residues Leu2–Ile22, Trp52–Phe72, Pro78–Met98, Ile112–Ile132, and Leu153–Val173. The disordered stretch occupies residues Trp191–Gly223.

The protein belongs to the PlsY family. As to quaternary structure, probably interacts with PlsX.

Its subcellular location is the cell inner membrane. The catalysed reaction is an acyl phosphate + sn-glycerol 3-phosphate = a 1-acyl-sn-glycero-3-phosphate + phosphate. It functions in the pathway lipid metabolism; phospholipid metabolism. Its function is as follows. Catalyzes the transfer of an acyl group from acyl-phosphate (acyl-PO(4)) to glycerol-3-phosphate (G3P) to form lysophosphatidic acid (LPA). This enzyme utilizes acyl-phosphate as fatty acyl donor, but not acyl-CoA or acyl-ACP. This Desulfovibrio desulfuricans (strain ATCC 27774 / DSM 6949 / MB) protein is Glycerol-3-phosphate acyltransferase.